Reading from the N-terminus, the 416-residue chain is UDP-N-acetylglucosamine 1-carboxyvinyltransferase (416 aa).

Residue 22 to 23 (KN) coordinates phosphoenolpyruvate. Residue Arg91 coordinates UDP-N-acetyl-alpha-D-glucosamine. Cys115 serves as the catalytic Proton donor. The residue at position 115 (Cys115) is a 2-(S-cysteinyl)pyruvic acid O-phosphothioketal. UDP-N-acetyl-alpha-D-glucosamine contacts are provided by residues 120–124 (RPIDL), Asp303, and Ile325.

Belongs to the EPSP synthase family. MurA subfamily.

It is found in the cytoplasm. The enzyme catalyses phosphoenolpyruvate + UDP-N-acetyl-alpha-D-glucosamine = UDP-N-acetyl-3-O-(1-carboxyvinyl)-alpha-D-glucosamine + phosphate. Its pathway is cell wall biogenesis; peptidoglycan biosynthesis. Functionally, cell wall formation. Adds enolpyruvyl to UDP-N-acetylglucosamine. The sequence is that of UDP-N-acetylglucosamine 1-carboxyvinyltransferase from Lawsonia intracellularis (strain PHE/MN1-00).